The chain runs to 132 residues: Ubiquinol-cytochrome c reductase complex assembly factor 4 (132 aa).

Positions 1–15 (MNRVLCAPAAGAVRA) are cleaved as a signal peptide. Residues 16–78 (LRLIGWASRS…GKGHQRPWWK (63 aa)) are Mitochondrial matrix-facing. Positions 29–72 (LPGSRDRAHPAAEEEDDPDRPIEFSSSKANPHRWSVGHTMGKGH) are disordered. The chain crosses the membrane as a helical span at residues 79-95 (VLPLSCFLVALIIWCYL). At 96–132 (REESEADQWLRQVWGEVPEPSDRSEEPETPAAYRART) the chain is on the mitochondrial intermembrane side. The segment at 110-132 (GEVPEPSDRSEEPETPAAYRART) is disordered.

This sequence belongs to the UQCC4 family. As to quaternary structure, forms a complex, named COMB/coordinator of mitochondrial CYTB biogenesis, composed of UQCC1, UQCC2, UQCC4, UQCC5 and UQCC6; stabilizes nascent cytochrome b/MT-CYB and promotes its membrane insertion. Forms a complex, named COMA, composed of UQCC1, UQCC2 and UQCC4; activates MT-CYB translation. Forms a complex, named COMC, composed of UQCC1, UQCC2; UQCC3 and UQCC4; mediates MT-CYB hemylation and association with the first nuclear-encoded complex III subunit UQCRQ. Complexes COMA and COMB are bound to the mitochondrion inner membrane by UQCC4.

The protein resides in the mitochondrion inner membrane. Functionally, required for the assembly and stability of the mitochondrial ubiquinol-cytochrome c reductase complex (complex III (CIII) or cytochrome b-c1 complex), a multisubunit transmembrane complex that is part of the mitochondrial electron transport chain (ETC) which drives oxidative phosphorylation. The protein is Ubiquinol-cytochrome c reductase complex assembly factor 4 of Homo sapiens (Human).